We begin with the raw amino-acid sequence, 1331 residues long: Retrotransposon-like protein 1 (1331 aa).

4 disordered regions span residues 1–123 (MMEP…SQED), 128–147 (TDLA…SSTV), 556–595 (EADE…ETFY), and 971–1033 (PSSE…DEPN). Residues 19–30 (SSKQMESSEGSS) are compositionally biased toward low complexity. 3 stretches are compositionally biased toward acidic residues: residues 109–123 (EMEE…SQED), 128–143 (TDLA…EEPD), and 569–578 (GSDDLSESEP). A compositionally biased stretch (low complexity) spans 992–1001 (RRVATTTRPT). Acidic residues predominate over residues 1015-1024 (PESEDEEESE). 2 helical membrane passes run 1070 to 1090 (FYRS…LVML) and 1117 to 1137 (LFLD…TQLF). The interval 1309–1331 (SPPREGATLEELPSDADEDAGLD) is disordered. Over residues 1320 to 1331 (LPSDADEDAGLD) the composition is skewed to acidic residues.

The protein resides in the membrane. Functionally, plays an essential role in capillaries endothelial cells for the maintenance of feto-maternal interface and for development of the placenta. This is Retrotransposon-like protein 1 (RTL1) from Bos taurus (Bovine).